A 578-amino-acid chain; its full sequence is MAAARLAAALLLLAAQVACEFGVLRVVSQTSRTRSRDYCILYNPQWAHLPHDLSKVSLLKLRDLSTTQLCSYLDVPAEDFTNQIALVARGNCTFYEKVRLAQGSGAHGLLIVSKEKLVPPGGNKTQYEEISIPVALLSHRDLQDIFRRFGREVMVALYAPSEPVMDYNMVIIFVMAVGTVAIGGYWAGSHDVKKYMKHKRDDGPEKQEDEAVDVTPVMICVFVVMCCFMLVLLYYFYDRLVYVIIGIFCLASSTGLYSCLAPFVRKLPFCTCRVPDNNLPYFHKRPQARMLLLALFCVTVSVVWGIFRNEDQWAWVLQDTLGIAFCLYMLKTIRLPTFKACTLLLLVLFIYDIFFVFITPFLTKSGNSIMVEVATGPSNSSTHEKLPMVLKVPRLNTSPLSLCDRPFSLLGFGDILVPGLLVAYCHRFDIQVQSSRIYFVACTIAYGLGLLVTFVALVLMQRGQPALLYLVPCTLLTSCTVALWRRELGAFWTGSGFAKDAPQTPWAATQGPVPPKAVGSSLSEQPPSEELAKSPLSTEEAGAADPAKDPDNPVASPLSPSNGDEAQPIPVVKPETSA.

The first 19 residues, 1–19, serve as a signal peptide directing secretion; that stretch reads MAAARLAAALLLLAAQVAC. The Lumenal segment spans residues 20–168; sequence EFGVLRVVSQ…APSEPVMDYN (149 aa). The PA domain occupies 61–145; it reads LRDLSTTQLC…LLSHRDLQDI (85 aa). N-linked (GlcNAc...) asparagine glycans are attached at residues N91 and N123. A helical transmembrane segment spans residues 169–189; that stretch reads MVIIFVMAVGTVAIGGYWAGS. The Cytoplasmic portion of the chain corresponds to 190–216; sequence HDVKKYMKHKRDDGPEKQEDEAVDVTP. A helical transmembrane segment spans residues 217–237; the sequence is VMICVFVVMCCFMLVLLYYFY. The Lumenal segment spans residues 238–239; sequence DR. Residues 240–260 traverse the membrane as a helical segment; sequence LVYVIIGIFCLASSTGLYSCL. The Cytoplasmic segment spans residues 261 to 286; it reads APFVRKLPFCTCRVPDNNLPYFHKRP. Residues 287 to 307 traverse the membrane as a helical segment; it reads QARMLLLALFCVTVSVVWGIF. Residues 308-312 lie on the Lumenal side of the membrane; that stretch reads RNEDQ. The chain crosses the membrane as a helical span at residues 313 to 333; sequence WAWVLQDTLGIAFCLYMLKTI. The Cytoplasmic segment spans residues 334 to 341; it reads RLPTFKAC. The chain crosses the membrane as a helical span at residues 342 to 362; that stretch reads TLLLLVLFIYDIFFVFITPFL. The active site involves D352. Residues 363-405 are Lumenal-facing; the sequence is TKSGNSIMVEVATGPSNSSTHEKLPMVLKVPRLNTSPLSLCDR. A helical membrane pass occupies residues 406-426; it reads PFSLLGFGDILVPGLLVAYCH. D414 is a catalytic residue. Residues 427–438 are Cytoplasmic-facing; the sequence is RFDIQVQSSRIY. The chain crosses the membrane as a helical span at residues 439 to 459; sequence FVACTIAYGLGLLVTFVALVL. Topologically, residues 460–463 are lumenal; the sequence is MQRG. A helical membrane pass occupies residues 464 to 484; sequence QPALLYLVPCTLLTSCTVALW. A PAL motif is present at residues 465 to 467; the sequence is PAL. The Cytoplasmic segment spans residues 485-578; the sequence is RRELGAFWTG…IPVVKPETSA (94 aa). The tract at residues 502–578 is disordered; that stretch reads PQTPWAATQG…IPVVKPETSA (77 aa). Low complexity predominate over residues 520 to 529; sequence SSLSEQPPSE.

The protein belongs to the peptidase A22B family. Monomer. Homodimer. Interacts with ITM2B and TNF. In terms of processing, glycosylated.

The protein localises to the cell membrane. It is found in the golgi apparatus membrane. The protein resides in the lysosome membrane. Its subcellular location is the endosome membrane. It localises to the membrane. Functionally, intramembrane-cleaving aspartic protease (I-CLiP) that cleaves type II membrane signal peptides in the hydrophobic plane of the membrane. Functions in ITM2B and TNF processing. Catalyzes the intramembrane cleavage of the anchored fragment of shed TNF-alpha (TNF), which promotes the release of the intracellular domain (ICD) for signaling to the nucleus. May play a role in the regulation of innate and adaptive immunity. The sequence is that of Signal peptide peptidase-like 2B from Mus musculus (Mouse).